Here is a 209-residue protein sequence, read N- to C-terminus: UPF0174 protein HP_1587 (209 aa).

It belongs to the UPF0174 family.

This Helicobacter pylori (strain ATCC 700392 / 26695) (Campylobacter pylori) protein is UPF0174 protein HP_1587.